Here is a 504-residue protein sequence, read N- to C-terminus: Maturase K (504 aa).

Belongs to the intron maturase 2 family. MatK subfamily.

Its subcellular location is the plastid. It is found in the chloroplast. Usually encoded in the trnK tRNA gene intron. Probably assists in splicing its own and other chloroplast group II introns. This Aruncus dioicus (Goat's beard) protein is Maturase K.